The chain runs to 509 residues: 2-isopropylmalate synthase (509 aa).

Positions 5 to 267 constitute a Pyruvate carboxyltransferase domain; that stretch reads IQIFDTTLRD…QTALNLEETK (263 aa). 4 residues coordinate Mn(2+): Asp-14, His-202, His-204, and Asn-238. Residues 391–509 are regulatory domain; it reads KLETLQLQYV…AAENVEKVGN (119 aa).

This sequence belongs to the alpha-IPM synthase/homocitrate synthase family. LeuA type 1 subfamily. Homodimer. Requires Mn(2+) as cofactor.

Its subcellular location is the cytoplasm. The catalysed reaction is 3-methyl-2-oxobutanoate + acetyl-CoA + H2O = (2S)-2-isopropylmalate + CoA + H(+). It functions in the pathway amino-acid biosynthesis; L-leucine biosynthesis; L-leucine from 3-methyl-2-oxobutanoate: step 1/4. Catalyzes the condensation of the acetyl group of acetyl-CoA with 3-methyl-2-oxobutanoate (2-ketoisovalerate) to form 3-carboxy-3-hydroxy-4-methylpentanoate (2-isopropylmalate). The protein is 2-isopropylmalate synthase of Staphylococcus aureus (strain Mu3 / ATCC 700698).